Consider the following 345-residue polypeptide: 3-isopropylmalate dehydrogenase (345 aa).

Residue 74-87 (GPKWDGLPRKISPE) coordinates NAD(+). 4 residues coordinate substrate: arginine 94, arginine 104, arginine 132, and aspartate 217. Residues aspartate 217, aspartate 241, and aspartate 245 each contribute to the Mg(2+) site. 274–286 (GSAPDIAGKGIAN) lines the NAD(+) pocket.

It belongs to the isocitrate and isopropylmalate dehydrogenases family. LeuB type 1 subfamily. Homodimer. The cofactor is Mg(2+). Mn(2+) is required as a cofactor.

Its subcellular location is the cytoplasm. The enzyme catalyses (2R,3S)-3-isopropylmalate + NAD(+) = 4-methyl-2-oxopentanoate + CO2 + NADH. The protein operates within amino-acid biosynthesis; L-leucine biosynthesis; L-leucine from 3-methyl-2-oxobutanoate: step 3/4. In terms of biological role, catalyzes the oxidation of 3-carboxy-2-hydroxy-4-methylpentanoate (3-isopropylmalate) to 3-carboxy-4-methyl-2-oxopentanoate. The product decarboxylates to 4-methyl-2 oxopentanoate. In Thermus thermophilus, this protein is 3-isopropylmalate dehydrogenase (leuB).